A 163-amino-acid chain; its full sequence is Nucleotide-binding protein C8J_0350 (163 aa).

This sequence belongs to the YajQ family.

In terms of biological role, nucleotide-binding protein. This Campylobacter jejuni subsp. jejuni serotype O:6 (strain 81116 / NCTC 11828) protein is Nucleotide-binding protein C8J_0350.